We begin with the raw amino-acid sequence, 274 residues long: Glutamate racemase (274 aa).

Substrate is bound by residues 10–11 (DS) and 42–43 (YG). C73 functions as the Proton donor/acceptor in the catalytic mechanism. Substrate is bound at residue 74 to 75 (NT). C184 serves as the catalytic Proton donor/acceptor. Position 185–186 (185–186 (TH)) interacts with substrate.

This sequence belongs to the aspartate/glutamate racemases family.

It catalyses the reaction L-glutamate = D-glutamate. It functions in the pathway cell wall biogenesis; peptidoglycan biosynthesis. In terms of biological role, provides the (R)-glutamate required for cell wall biosynthesis. The sequence is that of Glutamate racemase from Latilactobacillus sakei subsp. sakei (strain 23K) (Lactobacillus sakei subsp. sakei).